The sequence spans 152 residues: UPF0178 protein YaiI (152 aa).

It belongs to the UPF0178 family.

This is UPF0178 protein YaiI from Shigella boydii serotype 18 (strain CDC 3083-94 / BS512).